Here is a 319-residue protein sequence, read N- to C-terminus: Acetyl-coenzyme A carboxylase carboxyl transferase subunit alpha (319 aa).

In terms of domain architecture, CoA carboxyltransferase C-terminal spans 35-296; sequence NLDEEVQRLR…KAQLLADLND (262 aa).

Belongs to the AccA family. As to quaternary structure, acetyl-CoA carboxylase is a heterohexamer composed of biotin carboxyl carrier protein (AccB), biotin carboxylase (AccC) and two subunits each of ACCase subunit alpha (AccA) and ACCase subunit beta (AccD).

The protein resides in the cytoplasm. The enzyme catalyses N(6)-carboxybiotinyl-L-lysyl-[protein] + acetyl-CoA = N(6)-biotinyl-L-lysyl-[protein] + malonyl-CoA. It functions in the pathway lipid metabolism; malonyl-CoA biosynthesis; malonyl-CoA from acetyl-CoA: step 1/1. Functionally, component of the acetyl coenzyme A carboxylase (ACC) complex. First, biotin carboxylase catalyzes the carboxylation of biotin on its carrier protein (BCCP) and then the CO(2) group is transferred by the carboxyltransferase to acetyl-CoA to form malonyl-CoA. This is Acetyl-coenzyme A carboxylase carboxyl transferase subunit alpha from Yersinia pseudotuberculosis serotype O:3 (strain YPIII).